The following is a 332-amino-acid chain: Beta-hexosaminidase (332 aa).

Residues D62, R70, R131, and 161 to 162 (KH) each bind substrate. The Proton donor/acceptor role is filled by H174. D244 (nucleophile) is an active-site residue.

The protein belongs to the glycosyl hydrolase 3 family. NagZ subfamily.

It localises to the cytoplasm. The enzyme catalyses Hydrolysis of terminal non-reducing N-acetyl-D-hexosamine residues in N-acetyl-beta-D-hexosaminides.. It functions in the pathway cell wall biogenesis; peptidoglycan recycling. Its function is as follows. Plays a role in peptidoglycan recycling by cleaving the terminal beta-1,4-linked N-acetylglucosamine (GlcNAc) from peptide-linked peptidoglycan fragments, giving rise to free GlcNAc, anhydro-N-acetylmuramic acid and anhydro-N-acetylmuramic acid-linked peptides. The protein is Beta-hexosaminidase of Pseudomonas aeruginosa (strain LESB58).